The sequence spans 138 residues: Ribulose bisphosphate carboxylase small subunit (138 aa).

Belongs to the RuBisCO small chain family. In terms of assembly, heterohexadecamer of 8 large and 8 small subunits.

It is found in the plastid. Its subcellular location is the chloroplast. Functionally, ruBisCO catalyzes two reactions: the carboxylation of D-ribulose 1,5-bisphosphate, the primary event in carbon dioxide fixation, as well as the oxidative fragmentation of the pentose substrate in the photorespiration process. Both reactions occur simultaneously and in competition at the same active site. Although the small subunit is not catalytic it is essential for maximal activity. This is Ribulose bisphosphate carboxylase small subunit from Pyropia haitanensis (Red seaweed).